We begin with the raw amino-acid sequence, 464 residues long: Signal recognition particle 54 kDa protein (464 aa).

Residues 104-111, 184-188, and 242-245 contribute to the GTP site; these read GLQGSGKT, DTAGR, and TKLD.

Belongs to the GTP-binding SRP family. SRP54 subfamily. Part of the signal recognition particle protein translocation system, which is composed of SRP and FtsY. Archaeal SRP consists of a 7S RNA molecule of 300 nucleotides and two protein subunits: SRP54 and SRP19.

It is found in the cytoplasm. The enzyme catalyses GTP + H2O = GDP + phosphate + H(+). Functionally, involved in targeting and insertion of nascent membrane proteins into the cytoplasmic membrane. Binds to the hydrophobic signal sequence of the ribosome-nascent chain (RNC) as it emerges from the ribosomes. The SRP-RNC complex is then targeted to the cytoplasmic membrane where it interacts with the SRP receptor FtsY. The sequence is that of Signal recognition particle 54 kDa protein from Halorubrum lacusprofundi (strain ATCC 49239 / DSM 5036 / JCM 8891 / ACAM 34).